Reading from the N-terminus, the 709-residue chain is Eukaryotic translation initiation factor 3 subunit B (709 aa).

The tract at residues 1-98 (MSINEEEYLR…LFIQYKNVAD (98 aa)) is sufficient for interaction with HCR1 and TIF32. Positions 1–221 (MSINEEEYLR…GIQAWGGADF (221 aa)) are sufficient for interaction with PIC8. The RRM domain maps to 37–124 (NYVIVDGAPI…HRLLVNRLSD (88 aa)).

It belongs to the eIF-3 subunit B family. In terms of assembly, component of the eukaryotic translation initiation factor 3 (eIF-3) complex.

Its subcellular location is the cytoplasm. Functionally, RNA-binding component of the eukaryotic translation initiation factor 3 (eIF-3) complex, which is involved in protein synthesis of a specialized repertoire of mRNAs and, together with other initiation factors, stimulates binding of mRNA and methionyl-tRNAi to the 40S ribosome. The eIF-3 complex specifically targets and initiates translation of a subset of mRNAs involved in cell proliferation. This chain is Eukaryotic translation initiation factor 3 subunit B, found in Lodderomyces elongisporus (strain ATCC 11503 / CBS 2605 / JCM 1781 / NBRC 1676 / NRRL YB-4239) (Yeast).